The sequence spans 454 residues: Immediate-early protein ICP-46 homolog (454 aa).

Residues 330 to 357 (EKDIETIEKYEKTIQELIVELHNLYLKR) are a coiled coil. Residues 428-454 (SSPTASLSSLSPPSSNNNSPIRSPIRM) form a disordered region.

This sequence belongs to the IIV-6 393L family.

This Invertebrate iridescent virus 6 (IIV-6) protein is Immediate-early protein ICP-46 homolog.